The primary structure comprises 145 residues: Large ribosomal subunit protein uL11 (145 aa).

This sequence belongs to the universal ribosomal protein uL11 family. In terms of assembly, part of the ribosomal stalk of the 50S ribosomal subunit. Interacts with L10 and the large rRNA to form the base of the stalk. L10 forms an elongated spine to which L12 dimers bind in a sequential fashion forming a multimeric L10(L12)X complex. Post-translationally, one or more lysine residues are methylated.

Forms part of the ribosomal stalk which helps the ribosome interact with GTP-bound translation factors. This chain is Large ribosomal subunit protein uL11, found in Coxiella burnetii (strain CbuK_Q154) (Coxiella burnetii (strain Q154)).